The chain runs to 300 residues: NAD kinase (300 aa).

D75 functions as the Proton acceptor in the catalytic mechanism. NAD(+)-binding positions include 75 to 76 (DG), 149 to 150 (ND), R177, D179, 190 to 195 (TAYALS), A214, and Q248.

Belongs to the NAD kinase family. It depends on a divalent metal cation as a cofactor.

It localises to the cytoplasm. The enzyme catalyses NAD(+) + ATP = ADP + NADP(+) + H(+). In terms of biological role, involved in the regulation of the intracellular balance of NAD and NADP, and is a key enzyme in the biosynthesis of NADP. Catalyzes specifically the phosphorylation on 2'-hydroxyl of the adenosine moiety of NAD to yield NADP. This chain is NAD kinase, found in Burkholderia mallei (strain SAVP1).